The following is a 368-amino-acid chain: MSVAGLKKQFYKASQLVSEKVGGAEGTKLDDDFREMEKKVDITSKAVAEVLVRTIEYLQPNPASRAKLTMLNTVSKIRGQVKNPGYPQSEGLLGECMVRHGKELGGESNFGDALLDAGESMKRLAEVKDSLDIEVKQNFIDPLQNLCDKDLKEIQHHLKKLEGRRLDFDYKKKRQGKIPDEELRQALEKFEESKEVAETSMHNLLETDIEQVSQLSALVDAQLDYHRQAVQILEELADKLKRRVREASSRPRREFKPRPQEPFELGELEQPNGGFPCASAPKITASSSFRSGDKPTRTPSKSMPPLDQPSCKALYDFEPENDGELGFREGDLITLTNQIDENWYEGMLHGQSGFFPLSYVQVLVPLPQ.

The interval 1-21 (MSVAGLKKQFYKASQLVSEKV) is membrane-binding amphipathic helix. The BAR domain occupies 18–249 (SEKVGGAEGT…LKRRVREASS (232 aa)). The tract at residues 60–87 (PNPASRAKLTMLNTVSKIRGQVKNPGYP) is required for dimerization upon membrane association. Residues 180-250 (DEELRQALEK…KRRVREASSR (71 aa)) are a coiled coil. Positions 218–254 (LVDAQLDYHRQAVQILEELADKLKRRVREASSRPRRE) are interaction with ARC. Residues 243-309 (RVREASSRPR…SKSMPPLDQP (67 aa)) form a disordered region. Basic and acidic residues predominate over residues 245 to 261 (REASSRPRREFKPRPQE). Phosphoserine is present on serine 288. The residue at position 298 (threonine 298) is a Phosphothreonine. The region spanning 306-365 (LDQPSCKALYDFEPENDGELGFREGDLITLTNQIDENWYEGMLHGQSGFFPLSYVQVLVP) is the SH3 domain. At tyrosine 315 the chain carries Phosphotyrosine.

The protein belongs to the endophilin family. As to quaternary structure, interacts with ARC, SYNJ1 and DNM1. Interacts with PDCD6IP. Interacts with BIN2. In terms of tissue distribution, detected in brain and testis (at protein level). Ubiquitous.

It is found in the cytoplasm. Its subcellular location is the early endosome membrane. The protein localises to the cell projection. It localises to the podosome. In terms of biological role, implicated in endocytosis. May recruit other proteins to membranes with high curvature. This chain is Endophilin-A2 (Sh3gl1), found in Rattus norvegicus (Rat).